The following is a 638-amino-acid chain: Lactose permease (638 aa).

The permease stretch occupies residues 1–470 (MHNHKVSGKQ…AQVIEELKSK (470 aa)). Transmembrane regions (helical) follow at residues 27–47 (FYGVMSTYFIIFITSGMFSGL), 56–76 (IGLITGLMVLVRIIELVIDPI), 94–114 (WILIGTVVSAALLLILFTGIF), 121–141 (WILFAILFVLIYIAFDVFYSL), 166–186 (LGAFSGIIGWNSLPIIVVPLV), 204–224 (WFAFAAVISALAIICALIVCF), 261–281 (LAYLLYSLAAVITNGVLFYMY), 291–311 (FWVVGIIATIIGCCINPSFPV), 320–340 (WLFIAGQTCMVLAYVLFIFGH), 343–363 (VFLMDLGLVLFNINFALLVTV), 395–415 (FAGAVSNALVGYVAIAAGMTG), and 429–449 (TFNMMALYIPLALAVLSIVVF). The PTS EIIA type-1 domain occupies 503–610 (SSVVDEDGKP…KDTIVIFYTQ (108 aa)). H558 bears the Phosphohistidine; by HPr mark.

The protein in the N-terminal section; belongs to the sodium:galactoside symporter (TC 2.A.2) family.

Its subcellular location is the cell membrane. Responsible for transport of beta-galactosides into the cell, with the concomitant uptake of protons (symport system), and also for transport of homologous and heterologous exchange of beta-galactosides. The polypeptide is Lactose permease (lacS) (Lactobacillus helveticus (Lactobacillus suntoryeus)).